The following is a 202-amino-acid chain: Superoxide dismutase [Mn] (202 aa).

Position 27 (histidine 27) interacts with Mn(2+). A phosphothreonine mark is found at threonine 34 and threonine 70. Positions 82, 164, and 168 each coordinate Mn(2+).

Belongs to the iron/manganese superoxide dismutase family. In terms of assembly, homodimer. It depends on Mn(2+) as a cofactor.

The catalysed reaction is 2 superoxide + 2 H(+) = H2O2 + O2. Functionally, destroys superoxide anion radicals which are normally produced within the cells and which are toxic to biological systems. In Halalkalibacterium halodurans (strain ATCC BAA-125 / DSM 18197 / FERM 7344 / JCM 9153 / C-125) (Bacillus halodurans), this protein is Superoxide dismutase [Mn] (sodA).